The sequence spans 315 residues: Neuroguidin (315 aa).

Alanine 2 bears the N-acetylalanine mark. Residues leucine 7–alanine 41 are a coiled coil. The interval alanine 41–proline 174 is necessary for interaction with EIF4E. Phosphoserine occurs at positions 121, 142, and 143. Residues serine 123–glutamine 190 are disordered. Over residues glutamate 144–glutamine 155 the composition is skewed to acidic residues. The segment covering histidine 180–glutamine 190 has biased composition (basic and acidic residues). A coiled-coil region spans residues tyrosine 181–serine 203. Phosphoserine is present on residues serine 204 and serine 214. Composition is skewed to basic and acidic residues over residues glutamine 212–histidine 225 and serine 232–tyrosine 241. Disordered regions lie at residues glutamine 212–glutamate 243 and glycine 284–tryptophan 315. Residues valine 295–tryptophan 315 show a composition bias toward basic residues.

This sequence belongs to the SAS10 family. As to quaternary structure, interacts with CPEB1 and EIF4E. As to expression, expressed in testis, ovary, spleen, kidney, hippocampus and cerebellum (at protein level). Expressed in testis, ovary, spleen, kidney, brain.

The protein localises to the nucleus. The protein resides in the nucleolus. It is found in the chromosome. It localises to the centromere. Its subcellular location is the cytoplasm. The protein localises to the cell projection. The protein resides in the axon. It is found in the dendrite. It localises to the filopodium. Its function is as follows. Part of the small subunit (SSU) processome, first precursor of the small eukaryotic ribosomal subunit. During the assembly of the SSU processome in the nucleolus, many ribosome biogenesis factors, an RNA chaperone and ribosomal proteins associate with the nascent pre-rRNA and work in concert to generate RNA folding, modifications, rearrangements and cleavage as well as targeted degradation of pre-ribosomal RNA by the RNA exosome. Its dissociation from the complex determines the transition from state pre-A1 to state pre-A1*. Inhibits mRNA translation in a cytoplasmic polyadenylation element (CPE)-dependent manner. This is Neuroguidin (Ngdn) from Mus musculus (Mouse).